We begin with the raw amino-acid sequence, 237 residues long: Alpha-S1-casein (237 aa).

Positions Met-1–Ala-15 are cleaved as a signal peptide. The interval Glu-39 to Asp-60 is disordered. Phosphoserine occurs at positions 79, 80, and 81.

Belongs to the alpha-casein family. Mammary gland specific. Secreted in milk.

It localises to the secreted. Its function is as follows. Important role in the capacity of milk to transport calcium phosphate. The chain is Alpha-S1-casein (CSN1S1) from Notamacropus eugenii (Tammar wallaby).